Here is a 156-residue protein sequence, read N- to C-terminus: Lipoprotein signal peptidase (156 aa).

The next 3 helical transmembrane spans lie at V37–L57, F68–E88, and I95–Y115. Catalysis depends on residues D120 and D138. Residues A133–Y153 traverse the membrane as a helical segment.

It belongs to the peptidase A8 family.

The protein resides in the cell inner membrane. The catalysed reaction is Release of signal peptides from bacterial membrane prolipoproteins. Hydrolyzes -Xaa-Yaa-Zaa-|-(S,diacylglyceryl)Cys-, in which Xaa is hydrophobic (preferably Leu), and Yaa (Ala or Ser) and Zaa (Gly or Ala) have small, neutral side chains.. Its pathway is protein modification; lipoprotein biosynthesis (signal peptide cleavage). In terms of biological role, this protein specifically catalyzes the removal of signal peptides from prolipoproteins. The protein is Lipoprotein signal peptidase of Maridesulfovibrio salexigens (strain ATCC 14822 / DSM 2638 / NCIMB 8403 / VKM B-1763) (Desulfovibrio salexigens).